A 1292-amino-acid polypeptide reads, in one-letter code: (E3-independent) E2 ubiquitin-conjugating enzyme (1292 aa).

Residues 1–37 (MADPAAPTPAAPAPAQAPAPAPEAVPAPAAAPVPAPA) show a composition bias toward pro residues. 2 disordered regions span residues 1 to 56 (MADP…EAGS) and 85 to 114 (EDSD…EGRA). The span at 38 to 56 (PASDSASGPSSDSGPEAGS) shows a compositional bias: low complexity. 5 positions are modified to phosphoserine: serine 50, serine 87, serine 89, serine 399, and serine 401. 3 disordered regions span residues 401–459 (SPDT…AGEQ), 472–519 (RLHS…IPLS), and 714–746 (IEES…TDNG). A compositionally biased stretch (basic and acidic residues) spans 406 to 427 (CSRDHSMEDPDKKGESKTKSEA). At serine 441 the chain carries Phosphoserine. Acidic residues predominate over residues 478 to 490 (QDADDEAADDTDD). Phosphothreonine is present on residues threonine 488 and threonine 491. The span at 491 to 510 (TSSVTSSASSTTSSQSGSGT) shows a compositional bias: low complexity. The Nuclear localization signal motif lies at 512–536 (RKKSIPLSIKNLKRKHKRKKNKITR). Residue serine 515 is modified to Phosphoserine. The span at 732–742 (DEWEDDSDSWE) shows a compositional bias: acidic residues. Positions 812-882 (RELKEAIKIL…IVEEEKMEAV (71 aa)) form a coiled coil. Position 836 is a phosphoserine (serine 836). Threonine 838 is modified (phosphothreonine). A Phosphoserine modification is found at serine 839. Positions 882–893 (VPDVERKEDKPE) are enriched in basic and acidic residues. The disordered stretch occupies residues 882 to 903 (VPDVERKEDKPEGQSPVKAEWP). At serine 896 the chain carries Phosphoserine. Residues 953-1113 (KFFSTVRKEM…ALIRVVQSMT (161 aa)) enclose the UBC core domain. Cysteine 1040 serves as the catalytic Glycyl thioester intermediate. The segment at 1160-1248 (NGVPKASSSP…KSYRSFLPEK (89 aa)) is disordered.

Belongs to the ubiquitin-conjugating enzyme family. Interacts with CPNE1 (via VWFA domain) and CPNE4 (via VWFA domain). Interacts with UBR2. In terms of processing, phosphorylated. Phosphorylation affects subcellular location. Post-translationally, ubiquitinated: autoubiquitinates, possibly affecting its subcellular location. As to expression, predominantly expressed in skeletal muscle and heart.

The protein resides in the cytoplasm. The protein localises to the nucleus. It catalyses the reaction S-ubiquitinyl-[E1 ubiquitin-activating enzyme]-L-cysteine + [acceptor protein]-L-lysine = [E1 ubiquitin-activating enzyme]-L-cysteine + N(6)-monoubiquitinyl-[acceptor protein]-L-lysine.. The protein operates within protein modification; protein ubiquitination. Its activity is regulated as follows. inhibited by phenylarsine oxide (PAO). Its function is as follows. E2/E3 hybrid ubiquitin-protein ligase that displays both E2 and E3 ligase activities and mediates monoubiquitination of target proteins. Negatively regulates TRAF6-mediated NF-kappa-B activation independently of its E2 activity. Acts as a positive regulator of BMP7 signaling by mediating monoubiquitination of SMAD6, thereby regulating adipogenesis. Mediates monoubiquitination at different sites of the nuclear localization signal (NLS) of BAP1, leading to cytoplasmic retention of BAP1. Also able to monoubiquitinate the NLS of other chromatin-associated proteins, such as INO80 and CXXC1, affecting their subcellular location. Acts as a regulator of retrograde transport by assisting the TRIM27:MAGEL2 E3 ubiquitin ligase complex to mediate 'Lys-63'-linked ubiquitination of WASHC1, leading to promote endosomal F-actin assembly. This is (E3-independent) E2 ubiquitin-conjugating enzyme (UBE2O) from Homo sapiens (Human).